The following is a 452-amino-acid chain: Deoxybrevianamide E synthase notF (452 aa).

Basic and acidic residues predominate over residues M1–K19. The interval M1–L38 is disordered. The span at P21 to L38 shows a compositional bias: low complexity. E108 is a brevianamide F binding site. Residues R122, K212, Y214, K282, Y284, Y371, Y436, and Y440 each coordinate dimethylallyl diphosphate.

It belongs to the tryptophan dimethylallyltransferase family. As to quaternary structure, monomer.

The catalysed reaction is brevianamide F + dimethylallyl diphosphate = deoxybrevianamide E + diphosphate. It participates in alkaloid biosynthesis. With respect to regulation, addition of 5 mM Mg(2+), Ca(2+) or Mn(2+) slightly enhances catalysis (about 100-120%). Significant reduction of enzyme activity (2%-35%) is observed with Cu(2+), Zn(2+), Fe(2+), or Sn(2+) (5 mM). In terms of biological role, deoxybrevianamide E synthase; part of the gene cluster that mediates the biosynthesis of notoamide, a fungal indole alkaloid that belongs to a family of natural products containing a characteristic bicyclo[2.2.2]diazaoctane core. The first step of notoamide biosynthesis involves coupling of L-proline and L-tryptophan by the bimodular NRPS notE, to produce cyclo-L-tryptophan-L-proline called brevianamide F. The reverse prenyltransferase notF then acts as a deoxybrevianamide E synthase and converts brevianamide F to deoxybrevianamide E via reverse prenylation at C-2 of the indole ring leading to the bicyclo[2.2.2]diazaoctane core. Deoxybrevianamide E is further hydroxylated at C-6 of the indole ring, likely catalyzed by the cytochrome P450 monooxygenase notG, to yield 6-hydroxy-deoxybrevianamide E. 6-hydroxy-deoxybrevianamide E is a specific substrate of the prenyltransferase notC for normal prenylation at C-7 to produce 6-hydroxy-7-prenyl-deoxybrevianamide, also called notoamide S. As the proposed pivotal branching point in notoamide biosynthesis, notoamide S can be diverted to notoamide E through an oxidative pyran ring closure putatively catalyzed by either notH cytochrome P450 monooxygenase or the notD FAD-linked oxidoreductase. This step would be followed by an indole 2,3-epoxidation-initiated pinacol-like rearrangement catalyzed by the notB FAD-dependent monooxygenase leading to the formation of notoamide C and notoamide D. On the other hand notoamide S is converted to notoamide T by notH (or notD), a bifunctional oxidase that also functions as the intramolecular Diels-Alderase responsible for generation of (+)-notoamide T. To generate antipodal (-)-notoaminide T, notH' (or notD') in Aspergillus versicolor is expected to catalyze a Diels-Alder reaction leading to the opposite stereochemistry. The remaining oxidoreductase notD (or notH) likely catalyzes the oxidative pyran ring formation to yield (+)-stephacidin A. The FAD-dependent monooxygenase notI is highly similar to notB and is predicted to catalyze a similar conversion from (+)-stephacidin A to (-)-notoamide B via the 2,3-epoxidation of (+)-stephacidin A followed by a pinacol-type rearrangement. Finally, it remains unclear which enzyme could be responsible for the final hydroxylation steps leading to notoamide A and sclerotiamide. This chain is Deoxybrevianamide E synthase notF, found in Aspergillus sp. (strain MF297-2).